The sequence spans 844 residues: Beta-mannosidase B (844 aa).

Glutamate 432 acts as the Proton donor in catalysis.

The protein belongs to the glycosyl hydrolase 2 family. Beta-mannosidase B subfamily.

It carries out the reaction Hydrolysis of terminal, non-reducing beta-D-mannose residues in beta-D-mannosides.. The protein operates within glycan metabolism; N-glycan degradation. In terms of biological role, exoglycosidase that cleaves the single beta-linked mannose residue from the non-reducing end of beta-mannosidic oligosaccharides of various complexity and length. Prefers mannobiose over mannotriose and has no activity against polymeric mannan. Is also severely restricted by galactosyl substitutions at the +1 subsite. The chain is Beta-mannosidase B (mndB) from Aspergillus oryzae (strain ATCC 42149 / RIB 40) (Yellow koji mold).